We begin with the raw amino-acid sequence, 343 residues long: F-box/kelch-repeat protein At3g08810 (343 aa).

A compositionally biased stretch (basic residues) spans 1 to 15 (MSYPERKRKRSRWSK). A disordered region spans residues 1–25 (MSYPERKRKRSRWSKPHSTQNPSPS). The F-box domain occupies 20–66 (QNPSPSLPDDVLLSIFARVSRLYYPTLSHVSESFRSLLASPELYKAR). 3 Kelch repeats span residues 134–181 (DIYN…VRDG), 183–224 (QGGH…LPDS), and 225–271 (YCVI…VILA).

In Arabidopsis thaliana (Mouse-ear cress), this protein is F-box/kelch-repeat protein At3g08810.